Reading from the N-terminus, the 364-residue chain is Probable dual-specificity RNA methyltransferase RlmN (364 aa).

Catalysis depends on glutamate 107, which acts as the Proton acceptor. One can recognise a Radical SAM core domain in the interval 113-346 (HEYGNSVCVT…ATIRREQGSD (234 aa)). An intrachain disulfide couples cysteine 120 to cysteine 351. Residues cysteine 127, cysteine 131, and cysteine 134 each contribute to the [4Fe-4S] cluster site. Residues 177 to 178 (GE), serine 209, 232 to 234 (SLH), and asparagine 308 each bind S-adenosyl-L-methionine. The active-site S-methylcysteine intermediate is cysteine 351.

The protein belongs to the radical SAM superfamily. RlmN family. [4Fe-4S] cluster serves as cofactor.

It localises to the cytoplasm. The catalysed reaction is adenosine(2503) in 23S rRNA + 2 reduced [2Fe-2S]-[ferredoxin] + 2 S-adenosyl-L-methionine = 2-methyladenosine(2503) in 23S rRNA + 5'-deoxyadenosine + L-methionine + 2 oxidized [2Fe-2S]-[ferredoxin] + S-adenosyl-L-homocysteine. The enzyme catalyses adenosine(37) in tRNA + 2 reduced [2Fe-2S]-[ferredoxin] + 2 S-adenosyl-L-methionine = 2-methyladenosine(37) in tRNA + 5'-deoxyadenosine + L-methionine + 2 oxidized [2Fe-2S]-[ferredoxin] + S-adenosyl-L-homocysteine. Functionally, specifically methylates position 2 of adenine 2503 in 23S rRNA and position 2 of adenine 37 in tRNAs. Confers resistance to some classes of antibiotics. The protein is Probable dual-specificity RNA methyltransferase RlmN of Staphylococcus epidermidis (strain ATCC 12228 / FDA PCI 1200).